We begin with the raw amino-acid sequence, 602 residues long: MSSMRTHYCGLVTEQFSGQEVALTGWVQRRRDHGGVIFIDLRDREGLVQVVCDPDRPEMFKAAEEIRNEFCIRVTGKVRPRPAGTENANLTSGKIEVLCHELTVLNPSVTPPFQLDDDNLSETTRLTHRVLDLRRPQMQYNLRLRYKVAMEVRKFLDAQGFIDIETPMLGKSTPEGARDYLVPSRVNPGHFFALPQSPQIFKQMLMVSGFDRYYQITKCFRDEDLRADRQPEFTQIDCETSFLTEQEIRDLFEDMMRTVFKNAIDVDLDARFPVMEFREAMARFGSDKPDLRVKLEFTELTEVMKDVDFKVFSSPANSDNGRVVGLRVPGGGAISRGEIDAYTQFVGIYGAKGLAWIKVNEVAKGRDGLQSPIVKNLHDAAIAEILKRTGAQDGDIIFFGADKAKVVNDSIGALRLKIGHSDFGKANGLFEDTWKPLWVVDFPMFEYDEEDARWVAMHHPFTSPKDEHLEYLETDPGKCLAKAYDMVLNGWEMGGGSVRIFRSDIQSKVFRALNINDDEARAKFGYLLDALQYGAPPHGGLAFGLDRIVTMMAGADSIRDVIAFPKTQRAQDLLTQAPSSVDEKQLRELHIRLRATEPKPTA.

L-aspartate is bound at residue E175. The segment at 199 to 202 (QIFK) is aspartate. R221 serves as a coordination point for L-aspartate. ATP-binding positions include 221–223 (RDE) and Q230. An L-aspartate-binding site is contributed by H458. Residue E492 participates in ATP binding. R499 is a binding site for L-aspartate. 544–547 (GLDR) serves as a coordination point for ATP.

The protein belongs to the class-II aminoacyl-tRNA synthetase family. Type 1 subfamily. In terms of assembly, homodimer.

The protein localises to the cytoplasm. It catalyses the reaction tRNA(Asx) + L-aspartate + ATP = L-aspartyl-tRNA(Asx) + AMP + diphosphate. In terms of biological role, aspartyl-tRNA synthetase with relaxed tRNA specificity since it is able to aspartylate not only its cognate tRNA(Asp) but also tRNA(Asn). Reaction proceeds in two steps: L-aspartate is first activated by ATP to form Asp-AMP and then transferred to the acceptor end of tRNA(Asp/Asn). In Cupriavidus necator (strain ATCC 17699 / DSM 428 / KCTC 22496 / NCIMB 10442 / H16 / Stanier 337) (Ralstonia eutropha), this protein is Aspartate--tRNA(Asp/Asn) ligase.